The chain runs to 394 residues: 8-amino-7-oxononanoate synthase (394 aa).

Arginine 21 serves as a coordination point for substrate. 112–113 is a binding site for pyridoxal 5'-phosphate; sequence GY. Residue histidine 137 coordinates substrate. Pyridoxal 5'-phosphate contacts are provided by serine 183, histidine 211, and threonine 239. At lysine 242 the chain carries N6-(pyridoxal phosphate)lysine. Threonine 358 lines the substrate pocket.

The protein belongs to the class-II pyridoxal-phosphate-dependent aminotransferase family. BioF subfamily. Homodimer. The cofactor is pyridoxal 5'-phosphate.

The catalysed reaction is 6-carboxyhexanoyl-[ACP] + L-alanine + H(+) = (8S)-8-amino-7-oxononanoate + holo-[ACP] + CO2. It participates in cofactor biosynthesis; biotin biosynthesis. Its function is as follows. Catalyzes the decarboxylative condensation of pimeloyl-[acyl-carrier protein] and L-alanine to produce 8-amino-7-oxononanoate (AON), [acyl-carrier protein], and carbon dioxide. This Paraburkholderia xenovorans (strain LB400) protein is 8-amino-7-oxononanoate synthase.